The following is a 312-amino-acid chain: Aspartate carbamoyltransferase catalytic subunit (312 aa).

Carbamoyl phosphate is bound by residues Arg55 and Thr56. L-aspartate is bound at residue Lys83. Carbamoyl phosphate contacts are provided by Arg105, His138, and Gln141. Arg171 and Arg225 together coordinate L-aspartate. Positions 266 and 267 each coordinate carbamoyl phosphate.

The protein belongs to the aspartate/ornithine carbamoyltransferase superfamily. ATCase family. In terms of assembly, heterododecamer (2C3:3R2) of six catalytic PyrB chains organized as two trimers (C3), and six regulatory PyrI chains organized as three dimers (R2).

The enzyme catalyses carbamoyl phosphate + L-aspartate = N-carbamoyl-L-aspartate + phosphate + H(+). It functions in the pathway pyrimidine metabolism; UMP biosynthesis via de novo pathway; (S)-dihydroorotate from bicarbonate: step 2/3. In terms of biological role, catalyzes the condensation of carbamoyl phosphate and aspartate to form carbamoyl aspartate and inorganic phosphate, the committed step in the de novo pyrimidine nucleotide biosynthesis pathway. This Corynebacterium glutamicum (strain R) protein is Aspartate carbamoyltransferase catalytic subunit.